A 227-amino-acid polypeptide reads, in one-letter code: Uracil-DNA glycosylase (227 aa).

Aspartate 64 functions as the Proton acceptor in the catalytic mechanism.

This sequence belongs to the uracil-DNA glycosylase (UDG) superfamily. UNG family.

It localises to the cytoplasm. It carries out the reaction Hydrolyzes single-stranded DNA or mismatched double-stranded DNA and polynucleotides, releasing free uracil.. Excises uracil residues from the DNA which can arise as a result of misincorporation of dUMP residues by DNA polymerase or due to deamination of cytosine. In Erwinia tasmaniensis (strain DSM 17950 / CFBP 7177 / CIP 109463 / NCPPB 4357 / Et1/99), this protein is Uracil-DNA glycosylase.